The primary structure comprises 547 residues: MFLSPSAAMHDKILILDFGSQVTQLIARRVREAHVYCEIHPNDVSDDFVREFAPKGVILSGSHASTYEDHQLRAPQAVWDLGVPVLGICYGMQTMAVQLGGKVEWSDHREFGYAEVRAHGRTRLLDGIQDFATPEGHGMLKVWMSHGDKVGEMPPGFALMASTPSCPIAGMADEARGYYAVQFHPEVTHTVQGRKLLERFVLDIAGAKPDWIMRDHIEEAVARIREQVGDEEVILGLSGGVDSSVAAALIHRAIGDQLTCVFVDHGLLRLNEGKMVLDMFEGRLHAKVVHVDASEQFLGHLAGVADPEHKRKIIGREFVEVFQAEAKKLTNAKWLAQGTIYPDVIESGGAKTKKATTIKSHHNVGGLPETLGLKLLEPLRDLFKDEVRELGVALGLPAEMVYRHPFPGPGLGVRILGEVKRDYAELLRRADAIFIEELCGTLATEQDAAAGLCEPSQVGKSWYDLTSQAFAVFLPVKSVGVMGDGRTYDYVAALRAVQTTDFMTAHWAHLPYALLGRASNRIINEVRGINRVVYDVSGKPPATIEWE.

Residues 12–210 enclose the Glutamine amidotransferase type-1 domain; sequence KILILDFGSQ…VLDIAGAKPD (199 aa). Residue cysteine 89 is the Nucleophile of the active site. Residues histidine 184 and glutamate 186 contribute to the active site. Residues 211-403 enclose the GMPS ATP-PPase domain; sequence WIMRDHIEEA…LGLPAEMVYR (193 aa). 238 to 244 contributes to the ATP binding site; it reads SGGVDSS.

In terms of assembly, homodimer.

It catalyses the reaction XMP + L-glutamine + ATP + H2O = GMP + L-glutamate + AMP + diphosphate + 2 H(+). The protein operates within purine metabolism; GMP biosynthesis; GMP from XMP (L-Gln route): step 1/1. In terms of biological role, catalyzes the synthesis of GMP from XMP. In Burkholderia pseudomallei (strain 1710b), this protein is GMP synthase [glutamine-hydrolyzing].